A 64-amino-acid chain; its full sequence is MALPKIEDVRNLSDADLAEKIAEAKRELFDLRFQRATRQLEKPHLFKHTKHRLAQLLTVERERQ.

This sequence belongs to the universal ribosomal protein uL29 family.

The chain is Large ribosomal subunit protein uL29 from Synechococcus elongatus (strain ATCC 33912 / PCC 7942 / FACHB-805) (Anacystis nidulans R2).